Here is a 246-residue protein sequence, read N- to C-terminus: Pyridoxine 5'-phosphate synthase (246 aa).

Asn10 provides a ligand contact to 3-amino-2-oxopropyl phosphate. Residue 12 to 13 participates in 1-deoxy-D-xylulose 5-phosphate binding; the sequence is DH. 3-amino-2-oxopropyl phosphate is bound at residue Arg21. His46 acts as the Proton acceptor in catalysis. Residues Arg48 and His53 each contribute to the 1-deoxy-D-xylulose 5-phosphate site. Residue Glu73 is the Proton acceptor of the active site. Residue Thr103 participates in 1-deoxy-D-xylulose 5-phosphate binding. The Proton donor role is filled by His193. 3-amino-2-oxopropyl phosphate is bound by residues Gly194 and 215 to 216; that span reads GH.

This sequence belongs to the PNP synthase family. In terms of assembly, homooctamer; tetramer of dimers.

It is found in the cytoplasm. It catalyses the reaction 3-amino-2-oxopropyl phosphate + 1-deoxy-D-xylulose 5-phosphate = pyridoxine 5'-phosphate + phosphate + 2 H2O + H(+). Its pathway is cofactor biosynthesis; pyridoxine 5'-phosphate biosynthesis; pyridoxine 5'-phosphate from D-erythrose 4-phosphate: step 5/5. Functionally, catalyzes the complicated ring closure reaction between the two acyclic compounds 1-deoxy-D-xylulose-5-phosphate (DXP) and 3-amino-2-oxopropyl phosphate (1-amino-acetone-3-phosphate or AAP) to form pyridoxine 5'-phosphate (PNP) and inorganic phosphate. The sequence is that of Pyridoxine 5'-phosphate synthase from Rhodopirellula baltica (strain DSM 10527 / NCIMB 13988 / SH1).